The sequence spans 254 residues: MGELRIGKVEKYIHEKLEKKKLHFVLIDPDDTSPEVAGKLARVCEELGVDAIMVGGSTGAEGEVLDNVVRSIKDNSSLPVILFPGSHGGISRYADAIFFMSLLNSRNPFFITGAQALGAFTVKKFGIEPIPMAYIVVEPGETVGWVGDARPIPRHKPKLAAAYALAGQYLGMRLVYLEAGSGAPEPVPEEMVRVVKSVIDVPLIVGGGIKSGEQAKKLIKSGADIIVTGTAIEKAKSLEEARKRLEAIRNGVFV.

2 residues coordinate Mg(2+): D28 and S57. Residues 176–182 (YLEAGSG), 207–208 (GG), and 229–230 (GT) contribute to the sn-glycerol 1-phosphate site.

It belongs to the GGGP/HepGP synthase family. Group II subfamily. Requires Mg(2+) as cofactor.

It is found in the cytoplasm. It carries out the reaction sn-glycerol 1-phosphate + (2E,6E,10E)-geranylgeranyl diphosphate = sn-3-O-(geranylgeranyl)glycerol 1-phosphate + diphosphate. The protein operates within membrane lipid metabolism; glycerophospholipid metabolism. Prenyltransferase that catalyzes the transfer of the geranylgeranyl moiety of geranylgeranyl diphosphate (GGPP) to the C3 hydroxyl of sn-glycerol-1-phosphate (G1P). This reaction is the first ether-bond-formation step in the biosynthesis of archaeal membrane lipids. This is Geranylgeranylglyceryl phosphate synthase from Pyrococcus horikoshii (strain ATCC 700860 / DSM 12428 / JCM 9974 / NBRC 100139 / OT-3).